We begin with the raw amino-acid sequence, 101 residues long: Small ribosomal subunit protein uS14 (101 aa).

Belongs to the universal ribosomal protein uS14 family. Part of the 30S ribosomal subunit. Contacts proteins S3 and S10.

Functionally, binds 16S rRNA, required for the assembly of 30S particles and may also be responsible for determining the conformation of the 16S rRNA at the A site. This Phenylobacterium zucineum (strain HLK1) protein is Small ribosomal subunit protein uS14.